Here is a 53-residue protein sequence, read N- to C-terminus: Antilisterial bacteriocin subtilosin biosynthesis protein AlbB (53 aa).

2 helical membrane passes run 8–28 (ILLY…FVKS) and 30–50 (YLFT…ARKA).

It is found in the cell membrane. Functionally, involved in the production of the bacteriocin subtilosin. Required for maximal production and for optimal immunity to subtilosin. In Bacillus subtilis (strain 168), this protein is Antilisterial bacteriocin subtilosin biosynthesis protein AlbB (albB).